Here is a 70-residue protein sequence, read N- to C-terminus: Conotoxin Vc6.10 (70 aa).

Positions 1 to 19 (MEKLTILLLVAAVLTSTQA) are cleaved as a signal peptide. Residues 20 to 40 (LIQGGADERQKAKINFLSRSD) constitute a propeptide that is removed on maturation. Cystine bridges form between Cys-43–Cys-57, Cys-50–Cys-62, and Cys-56–Cys-69.

This sequence belongs to the conotoxin O2 superfamily. Expressed by the venom duct.

It is found in the secreted. Functionally, inhibits voltage-gated ion channels. This is Conotoxin Vc6.10 from Conus victoriae (Queen Victoria cone).